A 389-amino-acid chain; its full sequence is Large ribosomal subunit protein uL3 (389 aa).

The protein belongs to the universal ribosomal protein uL3 family.

The protein localises to the cytoplasm. This Debaryomyces hansenii (strain ATCC 36239 / CBS 767 / BCRC 21394 / JCM 1990 / NBRC 0083 / IGC 2968) (Yeast) protein is Large ribosomal subunit protein uL3 (RPL3).